Reading from the N-terminus, the 877-residue chain is Translation initiation factor IF-2 (877 aa).

Over residues 66–115 the composition is skewed to basic and acidic residues; it reads PKKESTAKKTTKKDEVKKEEKKTTTKKESKNPAKAVSEKKDEVKKEEKQP. Disordered regions lie at residues 66–127, 187–208, and 241–290; these read PKKE…LEEK, SDES…SKKE, and ENKP…KESE. A compositionally biased stretch (basic residues) spans 192-201; the sequence is KRKKKEKKNH. Residues 245-265 are compositionally biased toward polar residues; it reads AQPTNKKQPNILKQSLNNSIN. One can recognise a tr-type G domain in the interval 376–543; that stretch reads QRAPVITIMG…IVLLQADILE (168 aa). The G1 stretch occupies residues 385–392; the sequence is GHVDHGKT. Position 385 to 392 (385 to 392) interacts with GTP; sequence GHVDHGKT. Positions 410 to 414 are G2; it reads GITQH. The interval 431–434 is G3; sequence DTPG. GTP contacts are provided by residues 431–435 and 485–488; these read DTPGH and NKMD. A G4 region spans residues 485 to 488; the sequence is NKMD. The G5 stretch occupies residues 521 to 523; that stretch reads SAK.

The protein belongs to the TRAFAC class translation factor GTPase superfamily. Classic translation factor GTPase family. IF-2 subfamily.

Its subcellular location is the cytoplasm. Its function is as follows. One of the essential components for the initiation of protein synthesis. Protects formylmethionyl-tRNA from spontaneous hydrolysis and promotes its binding to the 30S ribosomal subunits. Also involved in the hydrolysis of GTP during the formation of the 70S ribosomal complex. In Campylobacter lari (strain RM2100 / D67 / ATCC BAA-1060), this protein is Translation initiation factor IF-2.